Here is a 517-residue protein sequence, read N- to C-terminus: DNA primase DnaG (517 aa).

The Toprim domain occupies 171–257 (DAIIILEGRA…CVEDLVQKEV (87 aa)). Residues glutamate 177, aspartate 219, and aspartate 221 each coordinate Mg(2+).

Belongs to the archaeal DnaG primase family. As to quaternary structure, forms a ternary complex with MCM helicase and DNA. Component of the archaeal exosome complex. Mg(2+) is required as a cofactor.

The enzyme catalyses ssDNA + n NTP = ssDNA/pppN(pN)n-1 hybrid + (n-1) diphosphate.. Its function is as follows. RNA polymerase that catalyzes the synthesis of short RNA molecules used as primers for DNA polymerase during DNA replication. Also part of the exosome, which is a complex involved in RNA degradation. Acts as a poly(A)-binding protein that enhances the interaction between heteromeric, adenine-rich transcripts and the exosome. The chain is DNA primase DnaG from Methanosarcina barkeri (strain Fusaro / DSM 804).